We begin with the raw amino-acid sequence, 345 residues long: Protein RecA (345 aa).

Residue 68 to 75 (GVESSGKT) participates in ATP binding.

Belongs to the RecA family.

The protein resides in the cytoplasm. In terms of biological role, can catalyze the hydrolysis of ATP in the presence of single-stranded DNA, the ATP-dependent uptake of single-stranded DNA by duplex DNA, and the ATP-dependent hybridization of homologous single-stranded DNAs. It interacts with LexA causing its activation and leading to its autocatalytic cleavage. This chain is Protein RecA, found in Aquifex aeolicus (strain VF5).